The chain runs to 65 residues: Movement protein TGBp3 (65 aa).

The Lumenal segment spans residues 1-6; the sequence is MLPKMQ. The chain crosses the membrane as a helical span at residues 7–26; that stretch reads PSAQCLIVFSLAFVLGWYVL. At 27-65 the chain is on the cytoplasmic side; the sequence is RPGNTSCVLLITGESVRLVNCELTKDLVEAVLLRPLKHL.

It belongs to the Tymovirales TGBp3 protein family.

The protein localises to the host endoplasmic reticulum membrane. In terms of biological role, plays a role in viral cell-to-cell propagation, by facilitating genome transport to neighboring plant cells through plasmosdesmata. May induce the formation of granular vesicles derived from the Endoplasmic reticulum, which align on actin filaments. This is Movement protein TGBp3 from Potato virus S (strain Peruvian).